The chain runs to 362 residues: Cytochrome c peroxidase, mitochondrial (362 aa).

A mitochondrion-targeting transit peptide spans 1–40; that stretch reads MASASRQILRAASRASTRTAFAPAASRGLAARTIAGRRFY. The active-site Proton acceptor is histidine 121. Position 244 (histidine 244) interacts with heme b. Tryptophan 260 functions as the Tryptophan radical intermediate in the catalytic mechanism.

Belongs to the peroxidase family. Cytochrome c peroxidase subfamily. In terms of assembly, forms a one-to-one complex with cytochrome c. It depends on heme b as a cofactor.

Its subcellular location is the mitochondrion matrix. The protein localises to the mitochondrion intermembrane space. The enzyme catalyses 2 Fe(II)-[cytochrome c] + H2O2 + 2 H(+) = 2 Fe(III)-[cytochrome c] + 2 H2O. Functionally, destroys radicals which are normally produced within the cells and which are toxic to biological systems. This Pyricularia oryzae (strain 70-15 / ATCC MYA-4617 / FGSC 8958) (Rice blast fungus) protein is Cytochrome c peroxidase, mitochondrial (CCP1).